A 324-amino-acid polypeptide reads, in one-letter code: Ribosomal RNA small subunit methyltransferase H (324 aa).

Residues 47 to 49 (GGH), Asp67, Leu96, Asp115, and Gln122 contribute to the S-adenosyl-L-methionine site.

The protein belongs to the methyltransferase superfamily. RsmH family.

It is found in the cytoplasm. The catalysed reaction is cytidine(1402) in 16S rRNA + S-adenosyl-L-methionine = N(4)-methylcytidine(1402) in 16S rRNA + S-adenosyl-L-homocysteine + H(+). Functionally, specifically methylates the N4 position of cytidine in position 1402 (C1402) of 16S rRNA. The sequence is that of Ribosomal RNA small subunit methyltransferase H from Halorhodospira halophila (strain DSM 244 / SL1) (Ectothiorhodospira halophila (strain DSM 244 / SL1)).